A 157-amino-acid polypeptide reads, in one-letter code: MAPKPEPSRRIVADNRAARYHYTIEDTLEAGIALTGTEVKSLRGGKATIGEAYAGPSGTDLMLFNAYIPEYLEANRFNHDTKRPRRLLLHRRQINKLIGATQRQGYTVVPLKIYFNDKGRAKVELGLGKGKQAHDKREAVKERDWQRDRARLMRDRG.

The interval 126-157 (GLGKGKQAHDKREAVKERDWQRDRARLMRDRG) is disordered. Basic and acidic residues predominate over residues 132–157 (QAHDKREAVKERDWQRDRARLMRDRG).

The protein belongs to the SmpB family.

The protein localises to the cytoplasm. Required for rescue of stalled ribosomes mediated by trans-translation. Binds to transfer-messenger RNA (tmRNA), required for stable association of tmRNA with ribosomes. tmRNA and SmpB together mimic tRNA shape, replacing the anticodon stem-loop with SmpB. tmRNA is encoded by the ssrA gene; the 2 termini fold to resemble tRNA(Ala) and it encodes a 'tag peptide', a short internal open reading frame. During trans-translation Ala-aminoacylated tmRNA acts like a tRNA, entering the A-site of stalled ribosomes, displacing the stalled mRNA. The ribosome then switches to translate the ORF on the tmRNA; the nascent peptide is terminated with the 'tag peptide' encoded by the tmRNA and targeted for degradation. The ribosome is freed to recommence translation, which seems to be the essential function of trans-translation. This chain is SsrA-binding protein, found in Methylobacterium radiotolerans (strain ATCC 27329 / DSM 1819 / JCM 2831 / NBRC 15690 / NCIMB 10815 / 0-1).